Consider the following 330-residue polypeptide: Beta-hexosaminidase (330 aa).

Residues D62, R70, R130, and 160-161 each bind substrate; that span reads KH. H173 functions as the Proton donor/acceptor in the catalytic mechanism. D242 serves as the catalytic Nucleophile.

Belongs to the glycosyl hydrolase 3 family. NagZ subfamily.

Its subcellular location is the cytoplasm. It catalyses the reaction Hydrolysis of terminal non-reducing N-acetyl-D-hexosamine residues in N-acetyl-beta-D-hexosaminides.. It participates in cell wall biogenesis; peptidoglycan recycling. Its function is as follows. Plays a role in peptidoglycan recycling by cleaving the terminal beta-1,4-linked N-acetylglucosamine (GlcNAc) from peptide-linked peptidoglycan fragments, giving rise to free GlcNAc, anhydro-N-acetylmuramic acid and anhydro-N-acetylmuramic acid-linked peptides. This chain is Beta-hexosaminidase, found in Vibrio cholerae serotype O1 (strain ATCC 39541 / Classical Ogawa 395 / O395).